The following is a 441-amino-acid chain: Squalene synthase (441 aa).

A run of 2 helical transmembrane segments spans residues 293–313 (SFQF…LVFG) and 420–440 (FKFN…YWYA).

This sequence belongs to the phytoene/squalene synthase family. It depends on Mg(2+) as a cofactor.

Its subcellular location is the endoplasmic reticulum membrane. The enzyme catalyses 2 (2E,6E)-farnesyl diphosphate + NADPH + H(+) = squalene + 2 diphosphate + NADP(+). It carries out the reaction 2 (2E,6E)-farnesyl diphosphate + NADH + H(+) = squalene + 2 diphosphate + NAD(+). It participates in terpene metabolism; lanosterol biosynthesis; lanosterol from farnesyl diphosphate: step 1/3. Its function is as follows. Catalyzes the condensation of 2 two farnesyl pyrophosphate moieties to form squalene. It is the first committed enzyme of the sterol biosynthesis pathway. Required for the biosynthesis of ergosterol. The sequence is that of Squalene synthase (ERG9) from Eremothecium gossypii (strain ATCC 10895 / CBS 109.51 / FGSC 9923 / NRRL Y-1056) (Yeast).